The primary structure comprises 220 residues: pH-response regulator palI/RIM9 homolog 1 (220 aa).

Over 1 to 5 the chain is Cytoplasmic; it reads MSHFK. Residues 6–26 form a helical membrane-spanning segment; sequence IVFLTSLSLALVFELFNTISV. At 27 to 89 the chain is on the extracellular side; it reads PITSHLFISE…NHAKYALSKL (63 aa). The helical transmembrane segment at 90 to 110 threads the bilayer; it reads LLVHVLSFVCVLVFWLFAILI. The Cytoplasmic segment spans residues 111-121; it reads CIKWLNTSKSV. The helical transmembrane segment at 122–142 threads the bilayer; it reads LLFAVGWSMVTFMVSLLGFLI. Residues 143 to 155 are Extracellular-facing; it reads DVLMFASHVTWSS. The helical transmembrane segment at 156–176 threads the bilayer; sequence WLMLVSAFFVALSGILLCLMI. Residues 177–220 are Cytoplasmic-facing; it reads RDLSYRRFVKLQGEVDVCVPMTEPRDPDELNEIWKKKTSKREIL.

The protein belongs to the palI/RIM9 family.

The protein localises to the cell membrane. Its function is as follows. Required for the proteolytic cleavage of the transcription factor RIM101 in response to alkaline ambient pH. In Kluyveromyces lactis (strain ATCC 8585 / CBS 2359 / DSM 70799 / NBRC 1267 / NRRL Y-1140 / WM37) (Yeast), this protein is pH-response regulator palI/RIM9 homolog 1.